Here is a 690-residue protein sequence, read N- to C-terminus: Elongation factor G (690 aa).

A tr-type G domain is found at 8–283 (DKYRNIGIMA…AVVDFLPSPL (276 aa)). GTP is bound by residues 17–24 (AHIDAGKT), 81–85 (DTPGH), and 135–138 (NKLD).

This sequence belongs to the TRAFAC class translation factor GTPase superfamily. Classic translation factor GTPase family. EF-G/EF-2 subfamily.

It is found in the cytoplasm. Functionally, catalyzes the GTP-dependent ribosomal translocation step during translation elongation. During this step, the ribosome changes from the pre-translocational (PRE) to the post-translocational (POST) state as the newly formed A-site-bound peptidyl-tRNA and P-site-bound deacylated tRNA move to the P and E sites, respectively. Catalyzes the coordinated movement of the two tRNA molecules, the mRNA and conformational changes in the ribosome. This chain is Elongation factor G, found in Zymomonas mobilis subsp. mobilis (strain ATCC 31821 / ZM4 / CP4).